A 260-amino-acid chain; its full sequence is POLG alternative reading frame (260 aa).

Disordered stretches follow at residues 1–50 (MEPK…LRPR) and 108–219 (ARRG…RRGG). Low complexity-rich tracts occupy residues 36–48 (AGSSSGALGLQLR), 116–154 (GRGAPQRRAPAEARALGAASRALARRGAAPAAPLRGQPG), and 164–186 (AEPALPGGGQLAVAGPAAPEAPG). Residues 104–130 (ANLRARRGDAWRGRGAPQRRAPAEARA) are required for nucleolar localization. 2 stretches are compositionally biased toward gly residues: residues 187–199 (LGLGGGLDPVRPR) and 209–219 (RGAGPGVRRGG).

In terms of assembly, interacts with C1QBP; the interaction results in nucleolar localization of C1QBP, probably due to prevention of C1QBP maturation and redirection from mitochondria to nucleoli. In terms of processing, undergoes proteolytic cleavage to produce a secreted C-terminal fragment.

Its subcellular location is the nucleus. It is found in the nucleolus. The protein localises to the secreted. The chain is POLG alternative reading frame from Homo sapiens (Human).